We begin with the raw amino-acid sequence, 273 residues long: UPF0380 protein YafZ (273 aa).

It belongs to the UPF0380 family.

This Escherichia coli (strain K12) protein is UPF0380 protein YafZ (yafZ).